Here is a 273-residue protein sequence, read N- to C-terminus: Putative pyruvate, phosphate dikinase regulatory protein (273 aa).

153–160 (GVSRTSKT) contributes to the ADP binding site.

This sequence belongs to the pyruvate, phosphate/water dikinase regulatory protein family. PDRP subfamily.

It catalyses the reaction N(tele)-phospho-L-histidyl/L-threonyl-[pyruvate, phosphate dikinase] + ADP = N(tele)-phospho-L-histidyl/O-phospho-L-threonyl-[pyruvate, phosphate dikinase] + AMP + H(+). The enzyme catalyses N(tele)-phospho-L-histidyl/O-phospho-L-threonyl-[pyruvate, phosphate dikinase] + phosphate + H(+) = N(tele)-phospho-L-histidyl/L-threonyl-[pyruvate, phosphate dikinase] + diphosphate. Its function is as follows. Bifunctional serine/threonine kinase and phosphorylase involved in the regulation of the pyruvate, phosphate dikinase (PPDK) by catalyzing its phosphorylation/dephosphorylation. The protein is Putative pyruvate, phosphate dikinase regulatory protein of Sinorhizobium medicae (strain WSM419) (Ensifer medicae).